Consider the following 578-residue polypeptide: Zinc finger-containing ubiquitin peptidase 1 (578 aa).

A C2H2-type 1 zinc finger spans residues 2 to 24 (LSCDICGETVTSEPDMKAHLIVH). Residues 29 to 52 (IVCPFCKLSGVSYDEMCFHIETAH) form a C2H2-type 2; atypical zinc finger. 2 consecutive C2H2-type zinc fingers follow at residues 154–177 (PECPFCGKIEEHSEDMETHVKTTH) and 193–215 (YDCPMCGLICTNYHILQEHVDLH). The segment at 226–248 (DRVQCSGDLQLAHQLQQEEDRKR) is MIU. The segment at 249–274 (RSEESRQEIEEFQKLQRQYGLDNSGG) is zUBD/ZHA. Residue lysine 262 is modified to N6-acetyllysine. Cysteine 360 serves as the catalytic Nucleophile. Catalysis depends on histidine 491, which acts as the Proton acceptor. Aspartate 512 is an active-site residue.

The protein belongs to the peptidase C78 family. ZUFSP subfamily. In terms of assembly, interacts with RPA1 and RPA2.

It is found in the cytoplasm. The protein localises to the nucleus. It catalyses the reaction Thiol-dependent hydrolysis of ester, thioester, amide, peptide and isopeptide bonds formed by the C-terminal Gly of ubiquitin (a 76-residue protein attached to proteins as an intracellular targeting signal).. Deubiquitinase with endodeubiquitinase activity that specifically interacts with and cleaves 'Lys-63'-linked long polyubiquitin chains. Shows only weak activity against 'Lys-11' and 'Lys-48'-linked chains. Plays an important role in genome stability pathways, functioning to prevent spontaneous DNA damage and also promote cellular survival in response to exogenous DNA damage. Modulates the ubiquitination status of replication protein A (RPA) complex proteins in response to replication stress. This is Zinc finger-containing ubiquitin peptidase 1 from Macaca fascicularis (Crab-eating macaque).